The chain runs to 316 residues: MKVLWVALVVALLAGCQADMEGELGSEEPLPPEQPRGQDSQPWEQVLGRLWDYLRWVQTLSDQVQEELLNTQVIQELTVLMEETMKEVKAYREELEGQLAPMAQETQARVSKELQAAQARLGSDMEDLRNRLAQYRSEVQAMLGQSTEELRARMASHLRKLRKRLLRDADDLKKRLAVYQAGASEGAERSVSAIRERLRPLVEQSQSRAATLSTQVGQPLLDRAEAWRQKLHGRLEEVGVRAQDRLDKMRQQLEEVRAKVEEQGSQIRLQAEAFQARLRSWFEPLVEDMQRQWAGLVEKVQLALHLSPTSPPSENH.

Residues 1–18 form the signal peptide; sequence MKVLWVALVVALLAGCQA. 8 repeat units span residues 79 to 100, 101 to 122, 123 to 144, 145 to 166, 167 to 188, 189 to 210, 211 to 232, and 233 to 254. The tract at residues 79-254 is 8 X 22 AA approximate tandem repeats; sequence VLMEETMKEV…RLDKMRQQLE (176 aa). Met142 bears the Methionine sulfoxide mark. The residue at position 146 (Ser146) is a Phosphoserine. Positions 157 to 167 are LDL and other lipoprotein receptors binding; that stretch reads HLRKLRKRLLR. 161–164 serves as a coordination point for heparin; the sequence is LRKR. Positions 209–289 are lipid-binding and lipoprotein association; sequence AATLSTQVGQ…SWFEPLVEDM (81 aa). A glycan (O-linked (GalNAc...) threonine) is linked at Thr211. A heparin-binding site is contributed by 228–235; that stretch reads RQKLHGRL. The segment at 265–316 is homooligomerization; that stretch reads SQIRLQAEAFQARLRSWFEPLVEDMQRQWAGLVEKVQLALHLSPTSPPSENH. A specificity for association with VLDL region spans residues 277–289; it reads RLRSWFEPLVEDM.

It belongs to the apolipoprotein A1/A4/E family. Homotetramer. May interact with ABCA1; functionally associated with ABCA1 in the biogenesis of HDLs. May interact with APP/A4 amyloid-beta peptide; the interaction is extremely stable in vitro but its physiological significance is unclear. May interact with MAPT. May interact with MAP2. In the cerebrospinal fluid, interacts with secreted SORL1. Interacts with PMEL; this allows the loading of PMEL luminal fragment on ILVs to induce fibril nucleation. In terms of processing, APOE exists as multiple glycosylated and sialylated glycoforms within cells and in plasma. The extent of glycosylation and sialylation are tissue and context specific. Glycated in plasma VLDL. Post-translationally, phosphorylated by FAM20C in the extracellular medium.

The protein resides in the secreted. It localises to the extracellular space. The protein localises to the extracellular matrix. It is found in the extracellular vesicle. Its subcellular location is the endosome. The protein resides in the multivesicular body. Its function is as follows. APOE is an apolipoprotein, a protein associating with lipid particles, that mainly functions in lipoprotein-mediated lipid transport between organs via the plasma and interstitial fluids. APOE is a core component of plasma lipoproteins and is involved in their production, conversion and clearance. Apolipoproteins are amphipathic molecules that interact both with lipids of the lipoprotein particle core and the aqueous environment of the plasma. As such, APOE associates with chylomicrons, chylomicron remnants, very low density lipoproteins (VLDL) and intermediate density lipoproteins (IDL) but shows a preferential binding to high-density lipoproteins (HDL). It also binds a wide range of cellular receptors including the LDL receptor/LDLR and the very low-density lipoprotein receptor/VLDLR that mediate the cellular uptake of the APOE-containing lipoprotein particles. Finally, APOE also has a heparin-binding activity and binds heparan-sulfate proteoglycans on the surface of cells, a property that supports the capture and the receptor-mediated uptake of APOE-containing lipoproteins by cells. The chain is Apolipoprotein E (APOE) from Ovis aries musimon (Mouflon).